A 339-amino-acid polypeptide reads, in one-letter code: Phenylalanine--tRNA ligase alpha subunit (339 aa).

Residue E253 participates in Mg(2+) binding.

Belongs to the class-II aminoacyl-tRNA synthetase family. Phe-tRNA synthetase alpha subunit type 1 subfamily. Tetramer of two alpha and two beta subunits. Mg(2+) is required as a cofactor.

The protein resides in the cytoplasm. It carries out the reaction tRNA(Phe) + L-phenylalanine + ATP = L-phenylalanyl-tRNA(Phe) + AMP + diphosphate + H(+). In Geobacter sulfurreducens (strain ATCC 51573 / DSM 12127 / PCA), this protein is Phenylalanine--tRNA ligase alpha subunit.